The chain runs to 350 residues: Histidinol-phosphate aminotransferase (350 aa).

N6-(pyridoxal phosphate)lysine is present on K220.

The protein belongs to the class-II pyridoxal-phosphate-dependent aminotransferase family. Histidinol-phosphate aminotransferase subfamily. As to quaternary structure, homodimer. The cofactor is pyridoxal 5'-phosphate.

It catalyses the reaction L-histidinol phosphate + 2-oxoglutarate = 3-(imidazol-4-yl)-2-oxopropyl phosphate + L-glutamate. It participates in amino-acid biosynthesis; L-histidine biosynthesis; L-histidine from 5-phospho-alpha-D-ribose 1-diphosphate: step 7/9. The chain is Histidinol-phosphate aminotransferase from Macrococcus caseolyticus (strain JCSC5402) (Macrococcoides caseolyticum).